Here is a 54-residue protein sequence, read N- to C-terminus: Hemolytic toxin (54 aa).

Residues 3–12 are plays an important role in the hemolytic activity; it reads ALAGTIIAGA. Residues 11-30 are N-terminal region; that stretch reads GASLGFQILDKVLGELGKVS.

Belongs to the actinoporin family. Sea anemone subfamily. Octamer or nonamer in membranes. Monomer in the soluble state.

It is found in the secreted. The protein resides in the nematocyst. It localises to the target cell membrane. Functionally, pore-forming protein that forms cations-selective hydrophilic pores of around 1 nm and causes cytolysis. Pore formation is a multi-step process that involves specific recognition of membrane sphingomyelin (but neither cholesterol nor phosphatidylcholine) using aromatic rich region and adjacent phosphocholine (POC) binding site, firm binding to the membrane (mainly driven by hydrophobic interactions) accompanied by the transfer of the N-terminal region to the lipid-water interface and finally pore formation after oligomerization of monomers. The polypeptide is Hemolytic toxin (Heteractis magnifica (Magnificent sea anemone)).